The sequence spans 293 residues: Pyridoxal 5'-phosphate synthase subunit PdxS (293 aa).

D23 lines the D-ribose 5-phosphate pocket. The active-site Schiff-base intermediate with D-ribose 5-phosphate is K80. G152 lines the D-ribose 5-phosphate pocket. R164 is a binding site for D-glyceraldehyde 3-phosphate. D-ribose 5-phosphate contacts are provided by residues G213 and G234–S235.

This sequence belongs to the PdxS/SNZ family. In terms of assembly, in the presence of PdxT, forms a dodecamer of heterodimers.

It catalyses the reaction aldehydo-D-ribose 5-phosphate + D-glyceraldehyde 3-phosphate + L-glutamine = pyridoxal 5'-phosphate + L-glutamate + phosphate + 3 H2O + H(+). The protein operates within cofactor biosynthesis; pyridoxal 5'-phosphate biosynthesis. Catalyzes the formation of pyridoxal 5'-phosphate from ribose 5-phosphate (RBP), glyceraldehyde 3-phosphate (G3P) and ammonia. The ammonia is provided by the PdxT subunit. Can also use ribulose 5-phosphate and dihydroxyacetone phosphate as substrates, resulting from enzyme-catalyzed isomerization of RBP and G3P, respectively. This chain is Pyridoxal 5'-phosphate synthase subunit PdxS, found in Herpetosiphon aurantiacus (strain ATCC 23779 / DSM 785 / 114-95).